An 81-amino-acid chain; its full sequence is EC protein I/II (81 aa).

Belongs to the metallothionein superfamily. Type 15 family.

In terms of biological role, binds 5 molecules of zinc. May have a role in Zn(2+) homeostasis during embryogenesis. This is EC protein I/II from Triticum aestivum (Wheat).